The sequence spans 355 residues: Putative arylamide transporter (355 aa).

Transmembrane regions (helical) follow at residues 22–42 (TVLW…YLTH), 44–64 (VFNH…MSAT), 71–91 (RAQQ…GVHA), 92–112 (LLGS…SVAV), 119–139 (VAQG…VLVF), and 150–170 (LFDA…LFPP).

The protein localises to the cell membrane. Functionally, may be involved in the import of arylamide compounds. This is Putative arylamide transporter from Mycobacterium bovis (strain ATCC BAA-935 / AF2122/97).